Here is a 277-residue protein sequence, read N- to C-terminus: Glutamate racemase (277 aa).

Substrate contacts are provided by residues 9-10 and 41-42; these read DS and YG. C73 functions as the Proton donor/acceptor in the catalytic mechanism. Position 74-75 (74-75) interacts with substrate; sequence NT. C183 acts as the Proton donor/acceptor in catalysis. 184 to 185 provides a ligand contact to substrate; it reads TH.

The protein belongs to the aspartate/glutamate racemases family.

The catalysed reaction is L-glutamate = D-glutamate. It functions in the pathway cell wall biogenesis; peptidoglycan biosynthesis. Its function is as follows. Provides the (R)-glutamate required for cell wall biosynthesis. In Shewanella denitrificans (strain OS217 / ATCC BAA-1090 / DSM 15013), this protein is Glutamate racemase.